The sequence spans 720 residues: Catalase-peroxidase (720 aa).

The signal sequence occupies residues 1-21; sequence MSENKCPVMHGSATTTENSMA. Positions 94–222 form a cross-link, tryptophyl-tyrosyl-methioninium (Trp-Tyr) (with M-248); sequence WHAAGTYRIA…LAAVMMGLIY (129 aa). Catalysis depends on His-95, which acts as the Proton acceptor. Positions 222 to 248 form a cross-link, tryptophyl-tyrosyl-methioninium (Tyr-Met) (with W-94); that stretch reads YVNPEGVDGKPDPLKTAQDIRETFARM. His-263 provides a ligand contact to heme b.

The protein belongs to the peroxidase family. Peroxidase/catalase subfamily. As to quaternary structure, homodimer or homotetramer. It depends on heme b as a cofactor. Formation of the three residue Trp-Tyr-Met cross-link is important for the catalase, but not the peroxidase activity of the enzyme.

It catalyses the reaction H2O2 + AH2 = A + 2 H2O. It carries out the reaction 2 H2O2 = O2 + 2 H2O. Its function is as follows. Bifunctional enzyme with both catalase and broad-spectrum peroxidase activity. The sequence is that of Catalase-peroxidase from Shewanella denitrificans (strain OS217 / ATCC BAA-1090 / DSM 15013).